Consider the following 401-residue polypeptide: MTLPKIKQVRAWFTGGATAEKGAGGGDYHDQGANHWIDDHIATPMSKYRDYEQLRQSFGINVLGTLVVEVEAENGQTGFAVSTAGEMGCFIVEKHLNRFIEGKCVSDIKLIHDQMLNATLYYSGSGGLVMNTISCVDLALWDLFGKVVGLPVYKLLGGAVRDEIQFYATGARPDLAKEMGFIGGKMPTHWGPHDGDAGIRKDAAMVADMREKCGEDFWLMLDCWMSQDVNYATKLAHACAPYNLKWIEECLPPQQYEGYRELKRNAPVGMMVTSGEHHGTLQSFRTLSETGIDIMQPDVGWCGGLTTLVEIAAIAKSRGQLVVPHGSSVYSHHAVITFTNTPFSEFLMTSPDCSTMRPQFDPILLNEPVPVNGRIHKSVLDKPGFGVELNRDCNLKRPYSH.

Substrate is bound by residues histidine 29 and arginine 55. Positions 222, 248, and 276 each coordinate Mg(2+). Residue histidine 325 is the Proton acceptor of the active site. Glutamate 345 provides a ligand contact to substrate.

It belongs to the mandelate racemase/muconate lactonizing enzyme family. RhamD subfamily. Homooctamer; tetramer of dimers. Mg(2+) is required as a cofactor.

The catalysed reaction is L-rhamnonate = 2-dehydro-3-deoxy-L-rhamnonate + H2O. Catalyzes the dehydration of L-rhamnonate to 2-keto-3-deoxy-L-rhamnonate (KDR). The polypeptide is L-rhamnonate dehydratase (Escherichia coli O157:H7).